The sequence spans 776 residues: Transcription factor MYB3R-1 (776 aa).

The segment at 1 to 41 (MKREMKAPTTPLESLQGDLKGKQGRTSGPARRSTKGQWTPE) is disordered. 3 HTH myb-type domains span residues 30–81 (ARRS…QKVL), 82–137 (NPEL…NPGI), and 138–188 (NKNA…KKKL). 3 consecutive DNA-binding regions (H-T-H motif) follow at residues 58 to 81 (WKKI…QKVL), 110 to 133 (WSTI…HNHL), and 161 to 184 (WAEL…NSSV). Disordered regions lie at residues 217-253 (SSWM…STND), 364-384 (FQSS…TDPE), and 401-435 (DNMK…AETH). Composition is skewed to polar residues over residues 240–253 (CSQA…STND), 364–380 (FQSS…SNSD), and 423–432 (GKGSLCSQAA). Residues 648–655 (KKRHRDLL) carry the Nuclear localization signal motif.

Component of a DREAM-like complex which modulates a variety of developmentally regulated genes and of the mitotic genes in proliferating and differentiated cells. As to expression, expressed ubiquitously at low levels. Expressed in roots, cotyledons, flowers and leaves, especially in vascular tissues.

It is found in the nucleus. Its function is as follows. Transcription factor that binds 5'-AACGG-3' motifs in gene promoters. Transcription activator involved in the regulation of cytokinesis, probably via the activation of several G2/M phase-specific genes transcription (e.g. KNOLLE). Transcription repressor that regulates organ growth. Binds to the promoters of G2/M-specific genes and to E2F target genes to prevent their expression in post-mitotic cells and to restrict the time window of their expression in proliferating cells. Required for the maintenance of diploidy. The protein is Transcription factor MYB3R-1 of Arabidopsis thaliana (Mouse-ear cress).